We begin with the raw amino-acid sequence, 145 residues long: D-aminoacyl-tRNA deacylase (145 aa).

Positions 137–138 match the Gly-cisPro motif, important for rejection of L-amino acids motif; the sequence is GP.

The protein belongs to the DTD family. As to quaternary structure, homodimer.

Its subcellular location is the cytoplasm. The enzyme catalyses glycyl-tRNA(Ala) + H2O = tRNA(Ala) + glycine + H(+). It catalyses the reaction a D-aminoacyl-tRNA + H2O = a tRNA + a D-alpha-amino acid + H(+). Its function is as follows. An aminoacyl-tRNA editing enzyme that deacylates mischarged D-aminoacyl-tRNAs. Also deacylates mischarged glycyl-tRNA(Ala), protecting cells against glycine mischarging by AlaRS. Acts via tRNA-based rather than protein-based catalysis; rejects L-amino acids rather than detecting D-amino acids in the active site. By recycling D-aminoacyl-tRNA to D-amino acids and free tRNA molecules, this enzyme counteracts the toxicity associated with the formation of D-aminoacyl-tRNA entities in vivo and helps enforce protein L-homochirality. The protein is D-aminoacyl-tRNA deacylase of Dichelobacter nodosus (strain VCS1703A).